The following is a 979-amino-acid chain: Putative disease resistance protein RGA1 (979 aa).

Residues 143–437 form the NB-ARC domain; sequence GSVLTEPQVY…MAHGFLLSKG (295 aa). 182 to 189 provides a ligand contact to ATP; that stretch reads GMGGLGKT. LRR repeat units lie at residues 524–547, 549–570, 571–594, 595–619, 637–661, 748–773, 823–841, 842–866, 868–890, 891–915, 917–939, and 940–965; these read FVSLRVLNLRNSNLNQLPSSIGDL, HLRYLDLSGNFRIRNLPKRLCK, LQNLQTLDLHYCDSLSCLPKQTSK, LGSLRNLLLDGCSLTSTPPRIGLLT, LGELKNLNLYGSISITKLDRVKKDT, LPCLESLELHTGSADVEYVEDNVHPG, VKTLKVIVTDATVLRSISN, LRALTSLDISDNVEATSLPEEMFKS, ANLKYLKISFFRNLKELPTSLAS, LNALKSLKFEFCDALESLPEEGVKG, TSLTELSVSNCMMLKCLPEGLQH, and LTALTTLTITQCPIVFKRCERGIGED.

It belongs to the disease resistance NB-LRR family.

In terms of biological role, disease resistance protein. Resistance proteins guard the plant against pathogens that contain an appropriate avirulence protein via a direct or indirect interaction with this avirulence protein. That triggers a defense system which restricts the pathogen growth. The protein is Putative disease resistance protein RGA1 (RGA1) of Solanum bulbocastanum (Wild potato).